We begin with the raw amino-acid sequence, 615 residues long: Isocitrate dehydrogenase kinase/phosphatase (615 aa).

Residues 328-334 (APGIRGL) and K349 each bind ATP. D384 is an active-site residue. Residues 595-615 (AEPPATPPVKQPDAGPARRVA) are disordered.

It belongs to the AceK family.

The protein resides in the cytoplasm. It carries out the reaction L-seryl-[isocitrate dehydrogenase] + ATP = O-phospho-L-seryl-[isocitrate dehydrogenase] + ADP + H(+). Its function is as follows. Bifunctional enzyme which can phosphorylate or dephosphorylate isocitrate dehydrogenase (IDH) on a specific serine residue. This is a regulatory mechanism which enables bacteria to bypass the Krebs cycle via the glyoxylate shunt in response to the source of carbon. When bacteria are grown on glucose, IDH is fully active and unphosphorylated, but when grown on acetate or ethanol, the activity of IDH declines drastically concomitant with its phosphorylation. In Cupriavidus taiwanensis (strain DSM 17343 / BCRC 17206 / CCUG 44338 / CIP 107171 / LMG 19424 / R1) (Ralstonia taiwanensis (strain LMG 19424)), this protein is Isocitrate dehydrogenase kinase/phosphatase.